Reading from the N-terminus, the 287-residue chain is Acetylglutamate kinase (287 aa).

Substrate contacts are provided by residues 65 to 66 (GG), arginine 87, and asparagine 181.

Belongs to the acetylglutamate kinase family. ArgB subfamily.

The protein resides in the cytoplasm. It carries out the reaction N-acetyl-L-glutamate + ATP = N-acetyl-L-glutamyl 5-phosphate + ADP. It participates in amino-acid biosynthesis; L-arginine biosynthesis; N(2)-acetyl-L-ornithine from L-glutamate: step 2/4. Its function is as follows. Catalyzes the ATP-dependent phosphorylation of N-acetyl-L-glutamate. This Syntrophomonas wolfei subsp. wolfei (strain DSM 2245B / Goettingen) protein is Acetylglutamate kinase.